The chain runs to 105 residues: Cell division protein FtsB (105 aa).

Topologically, residues 1 to 3 (MGK) are cytoplasmic. A helical transmembrane segment spans residues 4–21 (LTLLLLVLLGWLQYSLWL). Topologically, residues 22–105 (GKNGVHDLVR…PAAPATQDNQ (84 aa)) are periplasmic. The stretch at 28 to 62 (DLVRVESDVAAQQSNNAQLKARNDQLFAEIDDLNG) forms a coiled coil.

Belongs to the FtsB family. As to quaternary structure, part of a complex composed of FtsB, FtsL and FtsQ.

The protein resides in the cell inner membrane. Its function is as follows. Essential cell division protein. May link together the upstream cell division proteins, which are predominantly cytoplasmic, with the downstream cell division proteins, which are predominantly periplasmic. This is Cell division protein FtsB from Sodalis glossinidius (strain morsitans).